Consider the following 375-residue polypeptide: Odorant receptor 49b (375 aa).

Residues 1–28 (MFEDIQLIYMNIKILRFWALLYDKNLRR) lie on the Cytoplasmic side of the membrane. A helical transmembrane segment spans residues 29–49 (YVCIGLASFHIFTQIVYMMST). The Extracellular portion of the chain corresponds to 50-60 (NEGLTGIIRNS). Residues 61 to 77 (YMLVLWINTVLRAYLLL) form a helical membrane-spanning segment. The Cytoplasmic portion of the chain corresponds to 78-121 (ADHDRYLALIQKLTEAYYDLLNLNDSYISEILDQVNKVGKLMAR). The chain crosses the membrane as a helical span at residues 122–142 (GNLFFGMLTSMGFGLYPLSSS). The Extracellular segment spans residues 143 to 176 (ERVLPFGSKIPGLNEYESPYYEMWYIFQMLITPM). The helical transmembrane segment at 177–197 (GCCMYIPYTSLIVGLIMFGIV) threads the bilayer. Residues 198–251 (RCKALQHRLRQVALKHPYGDRDPRELREEIIACIRYQQSIIEYMDHINELTTMM) are Cytoplasmic-facing. A helical membrane pass occupies residues 252–272 (FLFELMAFSALLCALLFMLII). Residues 273–278 (VSGTSQ) lie on the Extracellular side of the membrane. Residues 279 to 299 (LIIVCMYINMILAQILALYWY) form a helical membrane-spanning segment. Topologically, residues 300–342 (ANELREQNLAVATAAYETEWFTFDVPLRKNILFMMMRAQRPAA) are cytoplasmic. A helical transmembrane segment spans residues 343–363 (ILLGNIRPITLELFQNLLNTT). Topologically, residues 364 to 375 (YTFFTVLKRVYG) are extracellular.

Belongs to the insect chemoreceptor superfamily. Heteromeric odorant receptor channel (TC 1.A.69) family. Or30a subfamily. In terms of assembly, interacts with Orco. Complexes exist early in the endomembrane system in olfactory sensory neurons (OSNs), coupling these complexes to the conserved ciliary trafficking pathway. Expressed in olfactory sensory neurons in the antenna.

Its subcellular location is the cell membrane. Odorant receptor which mediates acceptance or avoidance behavior, depending on its substrates. The odorant receptor repertoire encodes a large collection of odor stimuli that vary widely in identity, intensity, and duration. May form a complex with Orco to form odorant-sensing units, providing sensitive and prolonged odorant signaling and calcium permeability. This chain is Odorant receptor 49b (Or49b), found in Drosophila melanogaster (Fruit fly).